Reading from the N-terminus, the 888-residue chain is ETO1-like protein 1 (888 aa).

The BTB domain maps to 180–280; the sequence is KNVVFKIGEE…ACDRELASLI (101 aa). TPR repeat units follow at residues 381–414, 441–477, 511–544, 637–670, and 711–744; these read VLGFHRLGCMRLLRKEYREAEEAFETAFNLGHVY, SSVSPPLGWMYQERSFYCEGDKKLEDLEKATELDPTL, LECLEIRFCLYLGMDDYEAALRDIQAALTLCPDY, HERLVYEGWILYDTGHCEEGLQKAKESIGIKRSF, and GQALNNLGSVYVDCEKLDLAADCYINALKVRHTR. The stretch at 755–793 forms a coiled coil; sequence LRNDKAAAYEEMTRLIEKAQNNASAYEKRSEYCDRELAK. TPR repeat units follow at residues 807–840 and 842–873; these read VYPYRYRAAVLMDSRKEREAITELSRAIAFKADL and LLHLRAAFHEHIGDVTSALRDCRAALSVDPNH.

It belongs to the ETO1 family. As to quaternary structure, interacts with the C-terminal domain of ACS4, ACS5 and ACS9. In terms of tissue distribution, predominantly expressed in flowers.

The protein operates within protein modification; protein ubiquitination. Possible regulator of the ethylene pathway, which acts by regulating the stability of 1-aminocyclopropane-1-carboxylate synthase (ACS) enzymes. May act as a substrate-specific adapter that connects ACS enzymes, such as ACS5, to ubiquitin ligase complexes, leading to proteasomal degradation of ACS enzymes. The chain is ETO1-like protein 1 (EOL1) from Arabidopsis thaliana (Mouse-ear cress).